Here is a 438-residue protein sequence, read N- to C-terminus: Xylose isomerase (438 aa).

Catalysis depends on residues H100 and D103. The Mg(2+) site is built by E231, E267, H270, D295, D306, D308, and D338.

The protein belongs to the xylose isomerase family. Homotetramer. Mg(2+) serves as cofactor.

It localises to the cytoplasm. The enzyme catalyses alpha-D-xylose = alpha-D-xylulofuranose. In Pseudomonas savastanoi pv. phaseolicola (strain 1448A / Race 6) (Pseudomonas syringae pv. phaseolicola (strain 1448A / Race 6)), this protein is Xylose isomerase.